An 865-amino-acid polypeptide reads, in one-letter code: Leucine--tRNA ligase (865 aa).

Positions 58 to 68 (PYPSGNLHMGH) match the 'HIGH' region motif. Positions 629-633 (KMSKS) match the 'KMSKS' region motif. Lysine 632 contributes to the ATP binding site.

Belongs to the class-I aminoacyl-tRNA synthetase family.

The protein resides in the cytoplasm. The catalysed reaction is tRNA(Leu) + L-leucine + ATP = L-leucyl-tRNA(Leu) + AMP + diphosphate. This chain is Leucine--tRNA ligase, found in Synechococcus elongatus (strain ATCC 33912 / PCC 7942 / FACHB-805) (Anacystis nidulans R2).